The sequence spans 476 residues: Bifunctional protein HldE (476 aa).

Residues 1–318 (MAQYSAEFKQ…ENAIHARPET (318 aa)) form a ribokinase region. 195–198 (NMSE) serves as a coordination point for ATP. Aspartate 264 is an active-site residue. Positions 344 to 476 (MTNGCFDILH…VIEKIKLLKD (133 aa)) are cytidylyltransferase.

It in the N-terminal section; belongs to the carbohydrate kinase PfkB family. This sequence in the C-terminal section; belongs to the cytidylyltransferase family. Homodimer.

It carries out the reaction D-glycero-beta-D-manno-heptose 7-phosphate + ATP = D-glycero-beta-D-manno-heptose 1,7-bisphosphate + ADP + H(+). The enzyme catalyses D-glycero-beta-D-manno-heptose 1-phosphate + ATP + H(+) = ADP-D-glycero-beta-D-manno-heptose + diphosphate. Its pathway is nucleotide-sugar biosynthesis; ADP-L-glycero-beta-D-manno-heptose biosynthesis; ADP-L-glycero-beta-D-manno-heptose from D-glycero-beta-D-manno-heptose 7-phosphate: step 1/4. It participates in nucleotide-sugar biosynthesis; ADP-L-glycero-beta-D-manno-heptose biosynthesis; ADP-L-glycero-beta-D-manno-heptose from D-glycero-beta-D-manno-heptose 7-phosphate: step 3/4. The protein operates within bacterial outer membrane biogenesis; LOS core biosynthesis. Its function is as follows. Catalyzes the phosphorylation of D-glycero-D-manno-heptose 7-phosphate at the C-1 position to selectively form D-glycero-beta-D-manno-heptose-1,7-bisphosphate. Catalyzes the ADP transfer from ATP to D-glycero-beta-D-manno-heptose 1-phosphate, yielding ADP-D-glycero-beta-D-manno-heptose. In Haemophilus influenzae (strain ATCC 51907 / DSM 11121 / KW20 / Rd), this protein is Bifunctional protein HldE.